The following is a 302-amino-acid chain: Quinolinate synthase (302 aa).

2 residues coordinate iminosuccinate: His-24 and Ser-41. Cys-86 lines the [4Fe-4S] cluster pocket. Residues 112-114 (YVN) and Ser-129 contribute to the iminosuccinate site. Position 171 (Cys-171) interacts with [4Fe-4S] cluster. Residues 197 to 199 (HPE) and Thr-214 contribute to the iminosuccinate site. Cys-259 contacts [4Fe-4S] cluster.

This sequence belongs to the quinolinate synthase family. Type 2 subfamily. [4Fe-4S] cluster serves as cofactor.

It localises to the cytoplasm. It catalyses the reaction iminosuccinate + dihydroxyacetone phosphate = quinolinate + phosphate + 2 H2O + H(+). It participates in cofactor biosynthesis; NAD(+) biosynthesis; quinolinate from iminoaspartate: step 1/1. Functionally, catalyzes the condensation of iminoaspartate with dihydroxyacetone phosphate to form quinolinate. The protein is Quinolinate synthase of Dehalococcoides mccartyi (strain ATCC BAA-2100 / JCM 16839 / KCTC 5957 / BAV1).